A 207-amino-acid chain; its full sequence is Large ribosomal subunit protein uL4 (207 aa).

The tract at residues 47 to 78 (GTAKTKTRAEVRGGGKKPWRQKGTGRARQGSI) is disordered. Residues 60–71 (GGKKPWRQKGTG) show a composition bias toward basic residues.

It belongs to the universal ribosomal protein uL4 family. Part of the 50S ribosomal subunit.

Its function is as follows. One of the primary rRNA binding proteins, this protein initially binds near the 5'-end of the 23S rRNA. It is important during the early stages of 50S assembly. It makes multiple contacts with different domains of the 23S rRNA in the assembled 50S subunit and ribosome. Forms part of the polypeptide exit tunnel. This chain is Large ribosomal subunit protein uL4, found in Acholeplasma laidlawii (strain PG-8A).